The sequence spans 90 residues: Cell division topological specificity factor (90 aa).

This sequence belongs to the MinE family.

Functionally, prevents the cell division inhibition by proteins MinC and MinD at internal division sites while permitting inhibition at polar sites. This ensures cell division at the proper site by restricting the formation of a division septum at the midpoint of the long axis of the cell. The chain is Cell division topological specificity factor from Lachnoclostridium phytofermentans (strain ATCC 700394 / DSM 18823 / ISDg) (Clostridium phytofermentans).